We begin with the raw amino-acid sequence, 626 residues long: Serine/threonine-protein kinase PknH (626 aa).

Over 1 to 403 (MSDAQDSRVG…QTPRKTNPWP (403 aa)) the chain is Cytoplasmic. The 261-residue stretch at 16–276 (YHLKRLLGRG…DLALAAHEAL (261 aa)) folds into the Protein kinase domain. ATP contacts are provided by residues 22-30 (LGRGGMGEV) and K45. Catalysis depends on D139, which acts as the Proton acceptor. T170 carries the phosphothreonine modification. The interval 292 to 396 (QESTLPAPPK…GGPSPWAQTP (105 aa)) is disordered. Pro residues-rich tracts occupy residues 297–308 (PAPPKPVPPPTM) and 316–342 (RQPP…PAQP). Residues 343–355 (GPAGQRPGPTGQP) are compositionally biased toward low complexity. A helical transmembrane segment spans residues 404–424 (LVAGAAAVVLVLVLGAIGIWI). At 425–626 (AIRPKPVQPP…AKIVDKVNKE (202 aa)) the chain is on the extracellular side. 2 disulfides stabilise this stretch: C482/C545 and C587/C604.

The protein belongs to the protein kinase superfamily. Ser/Thr protein kinase family. The cofactor is a divalent metal cation. In terms of processing, autophosphorylated on threonine and serine residues. Dephosphorylated by PstP.

It localises to the cell membrane. It carries out the reaction L-seryl-[protein] + ATP = O-phospho-L-seryl-[protein] + ADP + H(+). The catalysed reaction is L-threonyl-[protein] + ATP = O-phospho-L-threonyl-[protein] + ADP + H(+). May regulate bacterial growth in response to external signals to facilitate adaptation to the host environment. The sequence is that of Serine/threonine-protein kinase PknH (pknH) from Mycobacterium tuberculosis (strain CDC 1551 / Oshkosh).